A 115-amino-acid chain; its full sequence is Inner membrane protein YidH (115 aa).

At 1-30 (MKISRLGEAPDYRFSLANERTFLAWIRTAL) the chain is on the cytoplasmic side. A helical transmembrane segment spans residues 31-51 (GFLAAGVGLDQLAPDFATPVI). The Periplasmic segment spans residues 52–53 (RE). Residues 54–74 (LLALLLCLFSGGLAMYGYLRW) form a helical membrane-spanning segment. Residues 75–92 (LRNEKAMRLKEDLPYTNS) are Cytoplasmic-facing. The helical transmembrane segment at 93–113 (LLIISLILMVVAVIVMGLVLY) threads the bilayer. Residues 114-115 (AG) are Periplasmic-facing.

This sequence to M.tuberculosis Rv2272.

The protein resides in the cell inner membrane. This chain is Inner membrane protein YidH (yidH), found in Escherichia coli O157:H7.